Consider the following 1235-residue polypeptide: ATP-dependent helicase/nuclease subunit A (1235 aa).

The 471-residue stretch at 12–482 (SLWTDDQWKA…IDLSQNFRSR (471 aa)) folds into the UvrD-like helicase ATP-binding domain. Residue 33–40 (AAAGSGKT) coordinates ATP. A UvrD-like helicase C-terminal domain is found at 509-800 (AAELTLGAKS…RMMTIHASKG (292 aa)).

It belongs to the helicase family. AddA subfamily. In terms of assembly, heterodimer of AddA and AddB/RexB. Mg(2+) is required as a cofactor.

It carries out the reaction Couples ATP hydrolysis with the unwinding of duplex DNA by translocating in the 3'-5' direction.. The catalysed reaction is ATP + H2O = ADP + phosphate + H(+). In terms of biological role, the heterodimer acts as both an ATP-dependent DNA helicase and an ATP-dependent, dual-direction single-stranded exonuclease. Recognizes the chi site generating a DNA molecule suitable for the initiation of homologous recombination. The AddA nuclease domain is required for chi fragment generation; this subunit has the helicase and 3' -&gt; 5' nuclease activities. The protein is ATP-dependent helicase/nuclease subunit A of Listeria monocytogenes serotype 4a (strain HCC23).